A 193-amino-acid polypeptide reads, in one-letter code: Ion-translocating oxidoreductase complex subunit A (193 aa).

A run of 6 helical transmembrane segments spans residues Leu-4–Gly-24, Leu-39–Leu-59, Leu-72–Val-92, Ser-102–Leu-122, Leu-134–Leu-154, and Pro-171–Val-191.

This sequence belongs to the NqrDE/RnfAE family. The complex is composed of six subunits: RnfA, RnfB, RnfC, RnfD, RnfE and RnfG.

It is found in the cell inner membrane. Its function is as follows. Part of a membrane-bound complex that couples electron transfer with translocation of ions across the membrane. This is Ion-translocating oxidoreductase complex subunit A from Syntrophotalea carbinolica (strain DSM 2380 / NBRC 103641 / GraBd1) (Pelobacter carbinolicus).